The chain runs to 25 residues: SPbeta prophage-derived uncharacterized protein YotF (25 aa).

The sequence is that of SPbeta prophage-derived uncharacterized protein YotF (yotF) from Bacillus subtilis (strain 168).